Consider the following 376-residue polypeptide: Aminomethyltransferase (376 aa).

It belongs to the GcvT family. The glycine cleavage system is composed of four proteins: P, T, L and H.

The enzyme catalyses N(6)-[(R)-S(8)-aminomethyldihydrolipoyl]-L-lysyl-[protein] + (6S)-5,6,7,8-tetrahydrofolate = N(6)-[(R)-dihydrolipoyl]-L-lysyl-[protein] + (6R)-5,10-methylene-5,6,7,8-tetrahydrofolate + NH4(+). The glycine cleavage system catalyzes the degradation of glycine. This Nostoc sp. (strain PCC 7120 / SAG 25.82 / UTEX 2576) protein is Aminomethyltransferase.